The following is a 725-amino-acid chain: Ophiobolin F synthase (725 aa).

The tract at residues 1-322 (MEYKYSTIVD…RYHADAKFNE (322 aa)) is (7Z)-ophiobola-7,19-dien-3-ol synthase. Residues Asp93 and Asp97 each contribute to the Mg(2+) site. Residue Asp93 participates in substrate binding. The DDXXD 1 signature appears at 93-97 (DDEID). Substrate-binding positions include 182 to 185 (RCMD), Asn226, 230 to 234 (SYEKE), and 313 to 314 (RY). An NSE/DTE motif is present at residues 226-234 (NDLFSYEKE). The geranylfarnesyl diphosphate synthase stretch occupies residues 323–725 (LQMLRAEHGV…LRMMLELLKV (403 aa)). Positions 362 to 388 (GVNGVNGKRKRSGEETADDARTNGNGI) are disordered. Residues 373 to 382 (SGEETADDAR) show a composition bias toward basic and acidic residues. Residues Lys436, Arg439, and His468 each contribute to the isopentenyl diphosphate site. Mg(2+) contacts are provided by Asp475 and Asp479. Residues 475–479 (DDIED) carry the DDXXD 2 motif. Arg484 is a binding site for dimethylallyl diphosphate. Arg485 contacts isopentenyl diphosphate. Residues Lys562, Thr563, Gln601, Asn608, Lys618, and Lys628 each coordinate dimethylallyl diphosphate.

It in the N-terminal section; belongs to the terpene synthase family. This sequence in the C-terminal section; belongs to the FPP/GGPP synthase family. Requires Mg(2+) as cofactor.

The catalysed reaction is isopentenyl diphosphate + (2E,6E)-farnesyl diphosphate = (2E,6E,10E)-geranylgeranyl diphosphate + diphosphate. It carries out the reaction isopentenyl diphosphate + (2E,6E,10E)-geranylgeranyl diphosphate = (2E,6E,10E,14E)-geranylfarnesyl diphosphate + diphosphate. It catalyses the reaction (2E,6E,10E,14E)-geranylfarnesyl diphosphate + H2O = ophiobolin F + diphosphate. It functions in the pathway secondary metabolite biosynthesis; terpenoid biosynthesis. Bifunctional sesterterpene synthase that converts isopentenyl diphosphate (IPP) and dimethylallyl diphosphate (DMAPP) into ophiobolin F. The C-terminal prenyltransferase (PT) domain of AcldOS converts isopentenyl diphosphate and dimethylallyl diphosphate into geranylfarnesyl diphosphate (GFPP), whereas the N-terminal terpene cyclase (TC) domain catalyzes the cyclization of GFPP to ophiobolin F. The protein is Ophiobolin F synthase of Aspergillus calidoustus.